The sequence spans 588 residues: Intracellular maltogenic amylase (588 aa).

Ca(2+)-binding residues include Asn149, Ser155, Gly174, and Asp176. His249 and Arg325 together coordinate substrate. Asp327 functions as the Nucleophile in the catalytic mechanism. Glu356 functions as the Proton donor in the catalytic mechanism. Substrate-binding positions include 422–423 (HD), Asp467, and Arg471.

Belongs to the glycosyl hydrolase 13 family. BbmA subfamily. As to quaternary structure, monomer or homodimer; in equilibrium. Requires Ca(2+) as cofactor.

It localises to the cytoplasm. Functionally, hydrolyzes beta-cyclodextrin to maltose and glucose, soluble starch to maltose and glucose, and pullulan to panose with trace amounts of maltose and glucose. It is also able to hydrolyze acarbose. Can also exhibit a transglycosylation activity transferring glucose or maltose to another moiety of sugars by forming alpha-(1,6)- and alpha-(1,3)-glycosidic linkages upon the hydrolysis of substrate at concentrations of 5% or higher. The protein is Intracellular maltogenic amylase (bbmA) of Bacillus subtilis (strain 168).